We begin with the raw amino-acid sequence, 236 residues long: Demethylmenaquinone methyltransferase (236 aa).

Residues Thr58, Asp79, and 106–107 (NA) contribute to the S-adenosyl-L-methionine site.

It belongs to the class I-like SAM-binding methyltransferase superfamily. MenG/UbiE family.

The enzyme catalyses a 2-demethylmenaquinol + S-adenosyl-L-methionine = a menaquinol + S-adenosyl-L-homocysteine + H(+). The protein operates within quinol/quinone metabolism; menaquinone biosynthesis; menaquinol from 1,4-dihydroxy-2-naphthoate: step 2/2. Methyltransferase required for the conversion of demethylmenaquinol (DMKH2) to menaquinol (MKH2). The chain is Demethylmenaquinone methyltransferase from Listeria welshimeri serovar 6b (strain ATCC 35897 / DSM 20650 / CCUG 15529 / CIP 8149 / NCTC 11857 / SLCC 5334 / V8).